The following is a 404-amino-acid chain: Multidrug resistance protein MdtG (404 aa).

A run of 11 helical transmembrane segments spans residues L19–V39, L56–A76, L90–I110, A113–V133, T144–A164, P171–I191, L222–L242, I254–P274, I288–T308, F317–N337, and A376–L396.

This sequence belongs to the major facilitator superfamily. DHA1 family. MdtG (TC 2.A.1.2.20) subfamily.

Its subcellular location is the cell inner membrane. The sequence is that of Multidrug resistance protein MdtG from Salmonella typhi.